Consider the following 279-residue polypeptide: 3-methyl-2-oxobutanoate hydroxymethyltransferase (279 aa).

Mg(2+) contacts are provided by Asp-44 and Asp-83. 3-methyl-2-oxobutanoate is bound by residues 44–45 (DS), Asp-83, and Lys-113. Mg(2+) is bound at residue Glu-115. Residue Glu-182 is the Proton acceptor of the active site.

This sequence belongs to the PanB family. In terms of assembly, homodecamer; pentamer of dimers. Requires Mg(2+) as cofactor.

It is found in the cytoplasm. The enzyme catalyses 3-methyl-2-oxobutanoate + (6R)-5,10-methylene-5,6,7,8-tetrahydrofolate + H2O = 2-dehydropantoate + (6S)-5,6,7,8-tetrahydrofolate. Its pathway is cofactor biosynthesis; (R)-pantothenate biosynthesis; (R)-pantoate from 3-methyl-2-oxobutanoate: step 1/2. Its function is as follows. Catalyzes the reversible reaction in which hydroxymethyl group from 5,10-methylenetetrahydrofolate is transferred onto alpha-ketoisovalerate to form ketopantoate. This chain is 3-methyl-2-oxobutanoate hydroxymethyltransferase, found in Desulfotalea psychrophila (strain LSv54 / DSM 12343).